The primary structure comprises 445 residues: MSYSKFDLTFKIGQYLDRHLVFPLLEFLAAKETYDQSELLQAKLEILSKTNMIDYVTDIRRMLYPEEDTPEEIIQRRGVVLSELQELQDAVEPVLRLMQRDDVMKTIETMRDPKTLINHLSTNKEYEFKIEMIDSMYRLAKYRYECGNYVESASYLYFCQLVMSPTDKNYLSVLWGKLASEILVQNWDGALDDLTKLREFIDNGGAGSTASNMQALQQRTWLVHWSLFVFFNHVKGRDLIIEMFLYKPLYLNAIQTMCPHILRYLATAVIINRSRRNALKDLVKVIQQEAYTYRDPITEFIEHLYVNFDFEAARRKLNQCQAVLLTDFFLIACLEEFVENARLMIFETFCRIHQVISIGMLAENLNMQPDEAECWIVNLIRNARLDAKIDSKLGHVVMGAQPLSPYQQLVERIDSLAVRSEALTSLVERKHKARNQDIRWGAQEF.

Residues 230-403 form the PCI domain; the sequence is FFNHVKGRDL…GHVVMGAQPL (174 aa).

The protein belongs to the eIF-3 subunit E family. Component of the eukaryotic translation initiation factor 3 (eIF-3) complex.

Its subcellular location is the cytoplasm. In terms of biological role, component of the eukaryotic translation initiation factor 3 (eIF-3) complex, which is involved in protein synthesis of a specialized repertoire of mRNAs and, together with other initiation factors, stimulates binding of mRNA and methionyl-tRNAi to the 40S ribosome. The eIF-3 complex specifically targets and initiates translation of a subset of mRNAs involved in cell proliferation. The sequence is that of Eukaryotic translation initiation factor 3 subunit E (eIF3-S6) from Bombyx mori (Silk moth).